The primary structure comprises 510 residues: 2,3-bisphosphoglycerate-independent phosphoglycerate mutase (510 aa).

The Mn(2+) site is built by Asp-13 and Ser-63. Ser-63 (phosphoserine intermediate) is an active-site residue. Residues His-124, 154–155, Arg-186, Arg-192, 262–265, and Lys-334 each bind substrate; these read RD and RADR. 5 residues coordinate Mn(2+): Asp-401, His-405, Asp-442, His-443, and His-461.

This sequence belongs to the BPG-independent phosphoglycerate mutase family. In terms of assembly, monomer. The cofactor is Mn(2+).

The enzyme catalyses (2R)-2-phosphoglycerate = (2R)-3-phosphoglycerate. The protein operates within carbohydrate degradation; glycolysis; pyruvate from D-glyceraldehyde 3-phosphate: step 3/5. Functionally, catalyzes the interconversion of 2-phosphoglycerate and 3-phosphoglycerate. The chain is 2,3-bisphosphoglycerate-independent phosphoglycerate mutase from Vibrio parahaemolyticus serotype O3:K6 (strain RIMD 2210633).